We begin with the raw amino-acid sequence, 70 residues long: Large ribosomal subunit protein uL29 (70 aa).

Belongs to the universal ribosomal protein uL29 family.

This chain is Large ribosomal subunit protein uL29, found in Prochlorococcus marinus (strain NATL1A).